The following is a 147-amino-acid chain: Large ribosomal subunit protein uL13 (147 aa).

The protein belongs to the universal ribosomal protein uL13 family. In terms of assembly, part of the 50S ribosomal subunit.

Functionally, this protein is one of the early assembly proteins of the 50S ribosomal subunit, although it is not seen to bind rRNA by itself. It is important during the early stages of 50S assembly. The protein is Large ribosomal subunit protein uL13 of Rhodococcus opacus (strain B4).